We begin with the raw amino-acid sequence, 201 residues long: Small ribosomal subunit protein uS4 (201 aa).

The S4 RNA-binding domain occupies 103 to 167 (RRLQTIVTKK…SKIPQVLEKT (65 aa)). The interval 163–201 (VLEKTKSEAPAEETVEAPAEETVEAPAEEKKEESPSTES) is disordered. The segment covering 172-185 (PAEETVEAPAEETV) has biased composition (acidic residues). Over residues 189 to 201 (AEEKKEESPSTES) the composition is skewed to basic and acidic residues.

This sequence belongs to the universal ribosomal protein uS4 family. As to quaternary structure, part of the 30S ribosomal subunit. Contacts protein S5. The interaction surface between S4 and S5 is involved in control of translational fidelity.

One of the primary rRNA binding proteins, it binds directly to 16S rRNA where it nucleates assembly of the body of the 30S subunit. Functionally, with S5 and S12 plays an important role in translational accuracy. The polypeptide is Small ribosomal subunit protein uS4 (Nitrosopumilus maritimus (strain SCM1)).